The chain runs to 531 residues: Importin subunit alpha-3 (531 aa).

The IBB domain occupies 1 to 58 (MSLRPSAKTEVRRNRYKVAVDAEEGRRRREDNLVEIRKNKREENLQKKRFTSSMAFGS). 8 ARM repeats span residues 111-153 (INEV…TSEN), 154-198 (TNVI…CRDL), 199-236 (VLSY…RGKP), 237-281 (PPAF…DKIQ), 282-321 (AVIE…DDLQ), 322-364 (TQMV…NADQ), 365-405 (IQAV…GGTH), and 406-447 (DQIK…VVGE). The tract at residues 500-524 (DNEEEGNDENHAPQSGFQFGSTNVP) is disordered. The segment covering 511 to 524 (APQSGFQFGSTNVP) has biased composition (polar residues).

This sequence belongs to the importin alpha family. In terms of assembly, forms a complex with importin subunit beta-1. Interacts with PRL1. Interacts with A.tumefaciens VirD2 and VirE2.

The protein localises to the nucleus. Functionally, binds to conventional NLS motifs and mediates nuclear protein import across the nuclear envelope. Acts as a cellular receptor for the nuclear import of the virD2 protein of Agrobacterium, but is not essential for Agrobacterium-mediated root transformation. May be involved in the regulation of pathogen-induced salicylic acid accumulation. The polypeptide is Importin subunit alpha-3 (Arabidopsis thaliana (Mouse-ear cress)).